A 584-amino-acid chain; its full sequence is Probable lysosomal cobalamin transporter (584 aa).

The next 10 helical transmembrane spans lie at 8–28 (LIWI…STFV), 46–66 (IFTL…VALV), 93–113 (TVVY…IVPF), 144–164 (TLVF…VPVA), 189–209 (ALTF…VIYS), 313–333 (LLGG…MLLT), 350–370 (ILGK…AASV), 376–396 (VIFI…IATI), 421–441 (ATVM…MIVV), and 509–529 (GIVD…VLLI).

This sequence belongs to the LIMR family. LMBRD1 subfamily.

The protein resides in the lysosome membrane. Its function is as follows. Probable lysosomal cobalamin transporter. Required to export cobalamin from lysosomes allowing its conversion to cofactors. This Coccidioides immitis (strain RS) (Valley fever fungus) protein is Probable lysosomal cobalamin transporter.